Reading from the N-terminus, the 301-residue chain is Putative S-adenosyl-L-methionine-dependent methyltransferase MMAR_4850 (301 aa).

Residues Asp127 and 156-157 (DL) contribute to the S-adenosyl-L-methionine site.

The protein belongs to the UPF0677 family.

Functionally, exhibits S-adenosyl-L-methionine-dependent methyltransferase activity. In Mycobacterium marinum (strain ATCC BAA-535 / M), this protein is Putative S-adenosyl-L-methionine-dependent methyltransferase MMAR_4850.